The sequence spans 311 residues: Coproporphyrin III ferrochelatase 1 (311 aa).

Residues Y12, R29, 45 to 46 (RY), S53, and Y124 contribute to the Fe-coproporphyrin III site. Residues H182 and E263 each coordinate Fe(2+).

This sequence belongs to the ferrochelatase family.

Its subcellular location is the cytoplasm. It carries out the reaction Fe-coproporphyrin III + 2 H(+) = coproporphyrin III + Fe(2+). Its pathway is porphyrin-containing compound metabolism; protoheme biosynthesis. Involved in coproporphyrin-dependent heme b biosynthesis. Catalyzes the insertion of ferrous iron into coproporphyrin III to form Fe-coproporphyrin III. The polypeptide is Coproporphyrin III ferrochelatase 1 (Bacillus cereus (strain ATCC 14579 / DSM 31 / CCUG 7414 / JCM 2152 / NBRC 15305 / NCIMB 9373 / NCTC 2599 / NRRL B-3711)).